The sequence spans 238 residues: 1-(5-phosphoribosyl)-5-[(5-phosphoribosylamino)methylideneamino] imidazole-4-carboxamide isomerase (238 aa).

Aspartate 8 functions as the Proton acceptor in the catalytic mechanism. Aspartate 130 acts as the Proton donor in catalysis.

The protein belongs to the HisA/HisF family.

Its subcellular location is the cytoplasm. It carries out the reaction 1-(5-phospho-beta-D-ribosyl)-5-[(5-phospho-beta-D-ribosylamino)methylideneamino]imidazole-4-carboxamide = 5-[(5-phospho-1-deoxy-D-ribulos-1-ylimino)methylamino]-1-(5-phospho-beta-D-ribosyl)imidazole-4-carboxamide. It participates in amino-acid biosynthesis; L-histidine biosynthesis; L-histidine from 5-phospho-alpha-D-ribose 1-diphosphate: step 4/9. This chain is 1-(5-phosphoribosyl)-5-[(5-phosphoribosylamino)methylideneamino] imidazole-4-carboxamide isomerase, found in Methanococcus maripaludis (strain C6 / ATCC BAA-1332).